Consider the following 583-residue polypeptide: Threonine--tRNA ligase (583 aa).

The segment at 185-478 (DHRKLGRELD…LVEHYGGAFP (294 aa)) is catalytic. Zn(2+) is bound by residues Cys-278, His-329, and His-455.

This sequence belongs to the class-II aminoacyl-tRNA synthetase family. In terms of assembly, homodimer. Zn(2+) is required as a cofactor.

The protein localises to the cytoplasm. It catalyses the reaction tRNA(Thr) + L-threonine + ATP = L-threonyl-tRNA(Thr) + AMP + diphosphate + H(+). Functionally, catalyzes the attachment of threonine to tRNA(Thr) in a two-step reaction: L-threonine is first activated by ATP to form Thr-AMP and then transferred to the acceptor end of tRNA(Thr). Also edits incorrectly charged L-seryl-tRNA(Thr). This is Threonine--tRNA ligase from Borrelia turicatae (strain 91E135).